A 631-amino-acid chain; its full sequence is Hepatocyte nuclear factor 1-alpha (631 aa).

The interval 1-31 (MVSKLSQLQTELLAALLESGLSKEALIQALG) is dimerization. An HNF-p1 domain is found at 1–32 (MVSKLSQLQTELLAALLESGLSKEALIQALGE). Positions 40 to 81 (GEGPLDKGESCGGGRGELAELPNGLGETRGSEDETDDDGEDF) are disordered. Serine 70 is modified (phosphoserine). Threonine 74 carries the phosphothreonine modification. The region spanning 87-182 (KELENLSPEE…VAQQFTHAGQ (96 aa)) is the POU-specific atypical domain. Serine 93 carries the phosphoserine modification. Residue lysine 117 forms a Glycyl lysine isopeptide (Lys-Gly) (interchain with G-Cter in ubiquitin) linkage. Interaction with DNA regions lie at residues 130–132 (QRE), 143–149 (HLSQHLN), 155–158 (KTQK), and 203–206 (RFKW). The disordered stretch occupies residues 183-205 (GGLIEEPTGDELPTKKGRRNRFK). Positions 197–205 (KKGRRNRFK) match the Nuclear localization signal motif. Positions 199-279 (GRRNRFKWGP…NRRKEEAFRH (81 aa)) form a DNA-binding region, homeobox; HNF1-type. Serine 247 carries the phosphoserine modification. Interaction with DNA stretches follow at residues 263-265 (RVY) and 270-273 (NRRK). Disordered stretches follow at residues 283 to 358 (MDTY…GLEP) and 545 to 567 (SDTE…TLHV). Pro residues predominate over residues 288–298 (GPPPGPGPGPA). The residue at position 313 (serine 313) is a Phosphoserine. The span at 325–353 (PATSETAEVPSSSGGPLVTVSTPLHQVSP) shows a compositional bias: polar residues.

The protein belongs to the HNF1 homeobox family. As to quaternary structure, binds DNA as a dimer. Heterotetramer with PCBD1; formed by a dimer of dimers. Interacts with PCBD1. Interacts with BHLHE41. Interacts with NR5A2. Interacts with SPOP; this interaction promotes ubiquitination and degradation of HNF1A. Post-translationally, ubiquitinated in s SPOP-dependent manner; leading to prteasomal degradation. In terms of tissue distribution, liver.

Its subcellular location is the nucleus. In terms of biological role, transcriptional activator that regulates the tissue specific expression of multiple genes, especially in pancreatic islet cells and in liver. Binds to the inverted palindrome 5'-GTTAATNATTAAC-3'. Activates the transcription of CYP1A2, CYP2E1 and CYP3A11. Its function is as follows. (Microbial infection) Plays a crucial role for hepatitis B virus gene transcription and DNA replication. Mechanistically, synergistically cooperates with NR5A2 to up-regulate the activity of one of the critical cis-elements in the hepatitis B virus genome enhancer II (ENII). This is Hepatocyte nuclear factor 1-alpha (HNF1A) from Homo sapiens (Human).